The chain runs to 49 residues: Large ribosomal subunit protein eL40 (49 aa).

Belongs to the eukaryotic ribosomal protein eL40 family.

The protein is Large ribosomal subunit protein eL40 of Haloquadratum walsbyi (strain DSM 16790 / HBSQ001).